Here is a 126-residue protein sequence, read N- to C-terminus: Protein K7 (126 aa).

Residues 24-44 traverse the membrane as a helical segment; that stretch reads LPLHLWILCSLLAFLPLLVFI.

Interacts with host CAMLG; this interaction allows efficient apoptosis inhibition. Additionally, interacts with vGPCR/ORF74 and induces its proteasomeal degradation.

It is found in the host membrane. It localises to the host mitochondrion. Its function is as follows. Plays a role in the inhibition of host apoptosis to allow completion of the viral lytic replication and may thus favor the maintenance of persistent infection in infected host. The protein is Protein K7 (K7) of Homo sapiens (Human).